We begin with the raw amino-acid sequence, 279 residues long: Oxygen-dependent coproporphyrinogen-III oxidase (279 aa).

Ser-102 provides a ligand contact to substrate. Positions 106 and 116 each coordinate a divalent metal cation. The active-site Proton donor is the His-116. Position 118 to 120 (118 to 120 (NTR)) interacts with substrate. Residues His-149 and His-179 each contribute to the a divalent metal cation site. The tract at residues 244–279 (YVEFNLLYDRGTKFGLMTDGNIEAILMSLPPVVKFN) is important for dimerization.

This sequence belongs to the aerobic coproporphyrinogen-III oxidase family. Homodimer. Requires a divalent metal cation as cofactor.

It is found in the cytoplasm. The enzyme catalyses coproporphyrinogen III + O2 + 2 H(+) = protoporphyrinogen IX + 2 CO2 + 2 H2O. Its pathway is porphyrin-containing compound metabolism; protoporphyrin-IX biosynthesis; protoporphyrinogen-IX from coproporphyrinogen-III (O2 route): step 1/1. Functionally, involved in the heme biosynthesis. Catalyzes the aerobic oxidative decarboxylation of propionate groups of rings A and B of coproporphyrinogen-III to yield the vinyl groups in protoporphyrinogen-IX. The protein is Oxygen-dependent coproporphyrinogen-III oxidase of Rickettsia typhi (strain ATCC VR-144 / Wilmington).